The chain runs to 418 residues: Serine hydroxymethyltransferase (418 aa).

Residues Leu121 and 125–127 (GHL) each bind (6S)-5,6,7,8-tetrahydrofolate. Lys230 is modified (N6-(pyridoxal phosphate)lysine). 356 to 358 (SPF) contacts (6S)-5,6,7,8-tetrahydrofolate.

It belongs to the SHMT family. As to quaternary structure, homodimer. Pyridoxal 5'-phosphate serves as cofactor.

The protein resides in the cytoplasm. The enzyme catalyses (6R)-5,10-methylene-5,6,7,8-tetrahydrofolate + glycine + H2O = (6S)-5,6,7,8-tetrahydrofolate + L-serine. Its pathway is one-carbon metabolism; tetrahydrofolate interconversion. It participates in amino-acid biosynthesis; glycine biosynthesis; glycine from L-serine: step 1/1. In terms of biological role, catalyzes the reversible interconversion of serine and glycine with tetrahydrofolate (THF) serving as the one-carbon carrier. This reaction serves as the major source of one-carbon groups required for the biosynthesis of purines, thymidylate, methionine, and other important biomolecules. Also exhibits THF-independent aldolase activity toward beta-hydroxyamino acids, producing glycine and aldehydes, via a retro-aldol mechanism. The protein is Serine hydroxymethyltransferase of Pseudoalteromonas translucida (strain TAC 125).